A 411-amino-acid polypeptide reads, in one-letter code: Glutamate dehydrogenase 2 (411 aa).

K102 is a catalytic residue.

The protein belongs to the Glu/Leu/Phe/Val dehydrogenases family.

The protein localises to the mitochondrion. The catalysed reaction is L-glutamate + NAD(+) + H2O = 2-oxoglutarate + NH4(+) + NADH + H(+). It carries out the reaction L-glutamate + NADP(+) + H2O = 2-oxoglutarate + NH4(+) + NADPH + H(+). The chain is Glutamate dehydrogenase 2 (GDH2) from Arabidopsis thaliana (Mouse-ear cress).